Here is a 628-residue protein sequence, read N- to C-terminus: tRNA uridine 5-carboxymethylaminomethyl modification enzyme MnmG (628 aa).

FAD contacts are provided by residues 14–19, Val126, and Ser181; that span reads GAGHAG. 273–287 contacts NAD(+); sequence GPRYCPSIEDKVVRF. Gln370 contributes to the FAD binding site.

Belongs to the MnmG family. As to quaternary structure, homodimer. Heterotetramer of two MnmE and two MnmG subunits. FAD serves as cofactor.

Its subcellular location is the cytoplasm. Its function is as follows. NAD-binding protein involved in the addition of a carboxymethylaminomethyl (cmnm) group at the wobble position (U34) of certain tRNAs, forming tRNA-cmnm(5)s(2)U34. The polypeptide is tRNA uridine 5-carboxymethylaminomethyl modification enzyme MnmG (Bacillus licheniformis (strain ATCC 14580 / DSM 13 / JCM 2505 / CCUG 7422 / NBRC 12200 / NCIMB 9375 / NCTC 10341 / NRRL NRS-1264 / Gibson 46)).